A 69-amino-acid chain; its full sequence is Large ribosomal subunit protein bL31 (69 aa).

4 residues coordinate Zn(2+): Cys16, Cys18, Cys37, and Cys40.

It belongs to the bacterial ribosomal protein bL31 family. Type A subfamily. As to quaternary structure, part of the 50S ribosomal subunit. Requires Zn(2+) as cofactor.

Binds the 23S rRNA. The polypeptide is Large ribosomal subunit protein bL31 (Syntrophotalea carbinolica (strain DSM 2380 / NBRC 103641 / GraBd1) (Pelobacter carbinolicus)).